The chain runs to 200 residues: Probable GTP-binding protein EngB (200 aa).

In terms of domain architecture, EngB-type G spans Ser26 to Lys200. GTP is bound by residues Gly34–Ser41, Gly61–Gln65, Asp80–Gly83, Thr147–Asp150, and Val179–Ser181. Mg(2+) is bound by residues Ser41 and Thr63.

It belongs to the TRAFAC class TrmE-Era-EngA-EngB-Septin-like GTPase superfamily. EngB GTPase family. Requires Mg(2+) as cofactor.

Necessary for normal cell division and for the maintenance of normal septation. This is Probable GTP-binding protein EngB from Ehrlichia ruminantium (strain Gardel).